A 155-amino-acid polypeptide reads, in one-letter code: Acetylaranotin biosynthesis cluster protein L (155 aa).

Its pathway is mycotoxin biosynthesis. Nonribosomal peptide synthetase; part of the gene cluster that mediates the biosynthesis of acetylaranotin, a member of the epipolythiodioxopiperazine (ETP) class of toxins characterized by a disulfide-bridged cyclic dipeptide. The first step of acetylaranotin biosynthesis is performed by the NRPS ataP which produces diketopiperazine cyclo-L-Phe-L-Phe via the condensation of 2 phenylalanines (L-Phe). The ataC domain of ataTC then catalyzes the formation of bishydroxylation of cyclo-L-Phe-L-Phe. The glutathione S-transferase domain ataG in ataIMG further catalyzes the conjugation of two glutathiones to the bishydroxylated intermediate. Next, the dipeptidase ataJ removes the Glu residues. The following step is performed by the carbon sulfur lyase domain ataI of ataIMG which may convert the bis-cysteinyl adduct to yield an epidithiol intermediate. The ataT domain from ataTC then catalyzes the oxidation of the free dithiols, followed by a cyclization step catalyzed by the cytochrome P450 ataF. AtaF probably acts as an epoxidase to promote a dual epoxidation formation at C8 and C9 along with C8' and C9', followed by the spontaneous nucleophilic attack of the amide nitrogens N10 and N10' to yield an intermediate with the pyrrolidine partial structure. The final steps of acetylaranotin biosynthesis involve the acetylation and ring rearrangement of an epitetrathiodiketopiperazine intermediate to produce acetylaranotin. AtaH probably catalyzes the acetylation of epitetrathiodiketopiperazine to produce a diacetate and ataY is responsible for the formation of the dihydrooxepin moiety that converts the diacetate intermediate to acetylaranotin via acetylapoaranotin. Both enzymes could function independently in the absence of the other. The specific function of ataL within the pathway has still to be determined. The acetylaranotin bis-thiomethyltransferase ataS located outside of acetylaranotin gene cluster is the main thiomethyltransferase responsible for converting acetylaranotin and its related intermediates to their methylated forms. This is Acetylaranotin biosynthesis cluster protein L from Aspergillus terreus (strain NIH 2624 / FGSC A1156).